The primary structure comprises 249 residues: 3-deoxy-D-manno-octulosonic acid kinase (249 aa).

D175 is an active-site residue.

It belongs to the protein kinase superfamily. KdkA/RfaP family.

It localises to the cell inner membrane. It catalyses the reaction an alpha-Kdo-(2-&gt;6)-lipid IVA + ATP = a 4-O-phospho-alpha-Kdo-(2-&gt;6)-lipid IVA + ADP + H(+). It participates in bacterial outer membrane biogenesis; LPS core biosynthesis. Its function is as follows. Catalyzes the ATP-dependent phosphorylation of the 3-deoxy-D-manno-octulosonic acid (Kdo) residue in Kdo-lipid IV(A) at the 4-OH position. The polypeptide is 3-deoxy-D-manno-octulosonic acid kinase (Xylella fastidiosa (strain M23)).